An 884-amino-acid chain; its full sequence is Chitin synthase E (884 aa).

2 disordered regions span residues 1 to 58 and 73 to 108; these read MGTP…PAVS and AVFA…SRAG. Composition is skewed to polar residues over residues 37–48 and 84–93; these read QSLLERNNSSHY and EAASENTFRA. An N-linked (GlcNAc...) asparagine glycan is attached at Asn44. Residues 95 to 105 show a composition bias toward basic and acidic residues; that stretch reads SNGDKASREGS. N-linked (GlcNAc...) asparagine glycosylation is present at Asn301. 7 consecutive transmembrane segments (helical) span residues 513–532, 556–576, 597–617, 635–655, 681–701, 708–728, and 812–832; these read WLNG…GRIY, IMTW…MDLV, IVNN…FIMA, YFSL…VGAF, GGIV…ASVL, IITS…ILMV, and VLVC…TATG. An N-linked (GlcNAc...) asparagine glycan is attached at Asn840. Residues 852–872 form a helical membrane-spanning segment; sequence VILWITAGLSLFRFIGSLWFL.

It belongs to the chitin synthase family. Class III subfamily.

It is found in the cell membrane. It catalyses the reaction [(1-&gt;4)-N-acetyl-beta-D-glucosaminyl](n) + UDP-N-acetyl-alpha-D-glucosamine = [(1-&gt;4)-N-acetyl-beta-D-glucosaminyl](n+1) + UDP + H(+). Polymerizes chitin, a structural polymer of the cell wall and septum, by transferring the sugar moiety of UDP-GlcNAc to the non-reducing end of the growing chitin polymer. Plays an important role in septal growth or maintenance. Mediates colony spore formation. ChsE and chsD seem to play a functionally redundant role in lateral cell wall chitin synthesis. Involved in resistance to echinocandins. The protein is Chitin synthase E of Aspergillus niger (strain ATCC MYA-4892 / CBS 513.88 / FGSC A1513).